The chain runs to 263 residues: Chymotrypsinogen B (263 aa).

The N-terminal stretch at 1–18 is a signal peptide; that stretch reads MAFLWLVSCFALVGATFG. Cystine bridges form between Cys-19–Cys-140, Cys-60–Cys-76, Cys-154–Cys-219, Cys-186–Cys-200, and Cys-209–Cys-238. The Peptidase S1 domain maps to 34–261; it reads IVNGEDAIPG…LMPWVQEILE (228 aa). The Charge relay system role is filled by His-75. Ser-93 is modified (phosphoserine). The Charge relay system role is filled by Asp-120. The Charge relay system role is filled by Ser-213.

It belongs to the peptidase S1 family.

The protein resides in the secreted. It localises to the extracellular space. The enzyme catalyses Preferential cleavage: Tyr-|-Xaa, Trp-|-Xaa, Phe-|-Xaa, Leu-|-Xaa.. The chain is Chymotrypsinogen B (Ctrb1) from Mus musculus (Mouse).